Reading from the N-terminus, the 369-residue chain is Pulmonary surfactant-associated protein D (369 aa).

A signal peptide spans 1-20 (MLLLPLSVLLLLTQPWRSLG). An S-nitrosocysteine mark is found at C35 and C40. The interval 41-215 (SPPEDGLPGR…ERGAKGESGL (175 aa)) is disordered. Positions 46 to 216 (GLPGRDGRDG…RGAKGESGLA (171 aa)) constitute a Collagen-like domain. Residues 47 to 65 (LPGRDGRDGREGPRGEKGD) are compositionally biased toward basic and acidic residues. P78 bears the 4-hydroxyproline mark. K87 carries the post-translational modification 5-hydroxylysine. An N-linked (GlcNAc...) asparagine glycan is attached at N90. Residue P96 is modified to 4-hydroxyproline. Position 99 is a 5-hydroxylysine (K99). Residues 139–148 (GPKGGVGAPG) are compositionally biased toward gly residues. A 4-hydroxyproline mark is found at P165 and P171. Positions 165–191 (PGEPGAPGRAGAPGPAGAIGPQGPSGA) are enriched in low complexity. A compositionally biased stretch (basic and acidic residues) spans 198-210 (KGDRGTPGERGAK). Residues 217–248 (EVNALRQRVGILEGQLQRLQNAFSQYKKAMLF) are a coiled coil. In terms of domain architecture, C-type lectin spans 254–369 (VGEKIFKTEG…GEQRLVICEF (116 aa)). 2 disulfide bridges follow: C275-C367 and C345-C359.

This sequence belongs to the SFTPD family. In terms of assembly, oligomeric complex of 4 set of homotrimers. Post-translationally, hydroxylation on proline residues within the sequence motif, GXPG, is most likely to be 4-hydroxy as this fits the requirement for 4-hydroxylation in vertebrates. S-nitrosylation at Cys-35 and Cys-40 alters the quaternary structure which results in a pro-inflammatory chemoattractive signaling activity with macrophages.

Its subcellular location is the secreted. It localises to the extracellular space. The protein resides in the extracellular matrix. It is found in the surface film. In terms of biological role, contributes to the lung's defense against inhaled microorganisms, organic antigens and toxins. Interacts with compounds such as bacterial lipopolysaccharides, oligosaccharides and fatty acids and modulates leukocyte action in immune response. May participate in the extracellular reorganization or turnover of pulmonary surfactant. Binds strongly maltose residues and to a lesser extent other alpha-glucosyl moieties. In Bos taurus (Bovine), this protein is Pulmonary surfactant-associated protein D (SFTPD).